Here is a 160-residue protein sequence, read N- to C-terminus: Deoxyuridine 5'-triphosphate nucleotidohydrolase (160 aa).

Substrate contacts are provided by residues 79-81, Asn92, 96-98, and Lys106; these read RSG and TVD.

Belongs to the dUTPase family. It depends on Mg(2+) as a cofactor.

It catalyses the reaction dUTP + H2O = dUMP + diphosphate + H(+). Its pathway is pyrimidine metabolism; dUMP biosynthesis; dUMP from dCTP (dUTP route): step 2/2. Its function is as follows. This enzyme is involved in nucleotide metabolism: it produces dUMP, the immediate precursor of thymidine nucleotides and it decreases the intracellular concentration of dUTP so that uracil cannot be incorporated into DNA. The chain is Deoxyuridine 5'-triphosphate nucleotidohydrolase from Sinorhizobium medicae (strain WSM419) (Ensifer medicae).